A 193-amino-acid chain; its full sequence is Peptidyl-tRNA hydrolase (193 aa).

Histidine 17 provides a ligand contact to tRNA. The active-site Proton acceptor is the histidine 22. Residues phenylalanine 68, asparagine 70, and asparagine 116 each contribute to the tRNA site.

This sequence belongs to the PTH family. As to quaternary structure, monomer.

The protein resides in the cytoplasm. The catalysed reaction is an N-acyl-L-alpha-aminoacyl-tRNA + H2O = an N-acyl-L-amino acid + a tRNA + H(+). In terms of biological role, hydrolyzes ribosome-free peptidyl-tRNAs (with 1 or more amino acids incorporated), which drop off the ribosome during protein synthesis, or as a result of ribosome stalling. Catalyzes the release of premature peptidyl moieties from peptidyl-tRNA molecules trapped in stalled 50S ribosomal subunits, and thus maintains levels of free tRNAs and 50S ribosomes. The protein is Peptidyl-tRNA hydrolase of Xanthomonas axonopodis pv. citri (strain 306).